The sequence spans 633 residues: Threonine--tRNA ligase (633 aa).

One can recognise a TGS domain in the interval 1-59; it reads MIKVTFLAEQKVKEYSGRVTGFDILQPDALREAIAFKVNGELYDLSREIESDTEIEVIQ. Residues 240–532 form a catalytic region; sequence DHRKIAKDMD…LIENYAGKFP (293 aa). Positions 332, 383, and 509 each coordinate Zn(2+).

The protein belongs to the class-II aminoacyl-tRNA synthetase family. Homodimer. It depends on Zn(2+) as a cofactor.

It localises to the cytoplasm. It carries out the reaction tRNA(Thr) + L-threonine + ATP = L-threonyl-tRNA(Thr) + AMP + diphosphate + H(+). Catalyzes the attachment of threonine to tRNA(Thr) in a two-step reaction: L-threonine is first activated by ATP to form Thr-AMP and then transferred to the acceptor end of tRNA(Thr). Also edits incorrectly charged L-seryl-tRNA(Thr). This is Threonine--tRNA ligase from Wolbachia pipientis subsp. Culex pipiens (strain wPip).